The following is a 481-amino-acid chain: MFLLLQILYILLFLNLADTSDDEYRLLKDLREGYDPMERPVSDHMKPVNVKLRLILQQLVDVDEKNQVITLVVWTQYTWNDYKMKWSPEEYGNITSLQIPFGTLWKPDILLFNSANEHFDSSFPVNMVVSNDGNVLFAPPGIMQFSCSLSMTWFPYDEQVCYLKFGSWTYGKKLDLRIDDADLPEGHKMDLQYYVPNGEFDLISTPAFRKSTTFLDETYVELYFHMHLKRRTMYYGLNWIIPSILISLSNILGFTMPVECGEKVTLQITNFLSIMVFLAMVSEVAPPTSESIPIIAAFFSFAIVILGVSICVSLITVNIFYRHPKMHRMGDWTRYIFLEWLPWFLLMSRPDHVFRKPKREKKKEEEEDEESNAGGKEEESELISQKQQRPRLLVNSQIVMDSTIPYLEEVIGYLKVFKAKLDDDEEEEEEILNWRFMAMVIDRASLFLFTGLIFGTTFVIFAACPNLFSADQIIETEPVIT.

Positions 1–19 (MFLLLQILYILLFLNLADT) are cleaved as a signal peptide. The Extracellular segment spans residues 20-235 (SDDEYRLLKD…MHLKRRTMYY (216 aa)). The N-linked (GlcNAc...) asparagine glycan is linked to N93. The cysteines at positions 147 and 161 are disulfide-linked. The next 3 membrane-spanning stretches (helical) occupy residues 236–256 (GLNW…GFTM), 264–284 (VTLQ…VSEV), and 292–312 (IPII…SICV). Over 313–443 (SLITVNIFYR…WRFMAMVIDR (131 aa)) the chain is Cytoplasmic. The segment at 356 to 384 (KPKREKKKEEEEDEESNAGGKEEESELIS) is disordered. The helical transmembrane segment at 444–464 (ASLFLFTGLIFGTTFVIFAAC) threads the bilayer.

This sequence belongs to the ligand-gated ion channel (TC 1.A.9) family. Acetylcholine receptor (TC 1.A.9.1) subfamily. As to quaternary structure, neuronal AChR seems to be composed of two different type of subunits: alpha and beta.

It localises to the postsynaptic cell membrane. It is found in the cell membrane. Its function is as follows. After binding acetylcholine, the AChR responds by an extensive change in conformation that affects all subunits and leads to opening of an ion-conducting channel across the plasma membrane. Nicotinic acetylcholine receptor in the MC pharyngeal motor neuron involved in pharyngeal pumping. Has a role in the determination of life span possibly via calorific restriction which affects growth rate, although this is independent of metabolic activity. This chain is Neuronal acetylcholine receptor subunit eat-2, found in Caenorhabditis briggsae.